The sequence spans 25 residues: Grammistin Pp 3 (25 aa).

This sequence belongs to the grammistin family. Group 3 subfamily. Exists as aggregates of 3-4 molecules. In terms of tissue distribution, expressed by the skin glands.

Its subcellular location is the secreted. Functionally, thanks to its abundant amphiphilic alpha-helices, it may integrate into membrane phospholipids, leading to lysis of the membrane. Has hemolytic activity. Has antibacterial activity with a broad spectrum against various species of bacteria including both Gram-positive and Gram-negative groups. Also has ichthyotoxic activity. The chain is Grammistin Pp 3 from Pogonoperca punctata (Clown grouper).